We begin with the raw amino-acid sequence, 104 residues long: NADH-quinone oxidoreductase subunit K (104 aa).

Helical transmembrane passes span 4 to 24 (VPASAYLTLAIILFCIGLFGA), 31 to 51 (VIVLVCIELMLNAANLNLVAF), and 67 to 87 (LFTMAVAAAEAALGLAILIAL).

This sequence belongs to the complex I subunit 4L family. NDH-1 is composed of 14 different subunits. Subunits NuoA, H, J, K, L, M, N constitute the membrane sector of the complex.

The protein resides in the cell membrane. It catalyses the reaction a quinone + NADH + 5 H(+)(in) = a quinol + NAD(+) + 4 H(+)(out). In terms of biological role, NDH-1 shuttles electrons from NADH, via FMN and iron-sulfur (Fe-S) centers, to quinones in the respiratory chain. The immediate electron acceptor for the enzyme in this species is believed to be a menaquinone. Couples the redox reaction to proton translocation (for every two electrons transferred, four hydrogen ions are translocated across the cytoplasmic membrane), and thus conserves the redox energy in a proton gradient. In Bacillus cereus (strain ATCC 14579 / DSM 31 / CCUG 7414 / JCM 2152 / NBRC 15305 / NCIMB 9373 / NCTC 2599 / NRRL B-3711), this protein is NADH-quinone oxidoreductase subunit K.